The following is a 101-amino-acid chain: Putative pterin-4-alpha-carbinolamine dehydratase (101 aa).

Belongs to the pterin-4-alpha-carbinolamine dehydratase family.

It catalyses the reaction (4aS,6R)-4a-hydroxy-L-erythro-5,6,7,8-tetrahydrobiopterin = (6R)-L-erythro-6,7-dihydrobiopterin + H2O. The polypeptide is Putative pterin-4-alpha-carbinolamine dehydratase (Rhizobium etli (strain ATCC 51251 / DSM 11541 / JCM 21823 / NBRC 15573 / CFN 42)).